A 582-amino-acid chain; its full sequence is Choline kinase (582 aa).

Residues 1–36 (MVQESRPGSVRSYSVGYQARSRSSSQRRHSLTRQRS) are disordered. Ser-30 is subject to Phosphoserine; by PKA. A phosphoserine mark is found at Ser-48 and Ser-51. Thr-54 is modified (phosphothreonine). Ser-85 carries the phosphoserine; by PKA modification.

Belongs to the choline/ethanolamine kinase family. As to quaternary structure, monomer. Interacts with NAP1. Requires Mg(2+) as cofactor.

The protein resides in the cytoplasm. The enzyme catalyses choline + ATP = phosphocholine + ADP + H(+). It catalyses the reaction ethanolamine + ATP = phosphoethanolamine + ADP + H(+). Its pathway is phospholipid metabolism; phosphatidylcholine biosynthesis; phosphocholine from choline: step 1/1. Its function is as follows. Catalyzes the committed step in the synthesis of phosphatidylcholine by the CDP-choline pathway. Also exhibits ethanolamine kinase activity but it is a poor substrate at 14% efficiency compared with choline. The chain is Choline kinase from Saccharomyces cerevisiae (strain ATCC 204508 / S288c) (Baker's yeast).